A 311-amino-acid chain; its full sequence is Methionyl-tRNA formyltransferase (311 aa).

110 to 113 contacts (6S)-5,6,7,8-tetrahydrofolate; the sequence is SLLP.

This sequence belongs to the Fmt family.

It catalyses the reaction L-methionyl-tRNA(fMet) + (6R)-10-formyltetrahydrofolate = N-formyl-L-methionyl-tRNA(fMet) + (6S)-5,6,7,8-tetrahydrofolate + H(+). In terms of biological role, attaches a formyl group to the free amino group of methionyl-tRNA(fMet). The formyl group appears to play a dual role in the initiator identity of N-formylmethionyl-tRNA by promoting its recognition by IF2 and preventing the misappropriation of this tRNA by the elongation apparatus. The sequence is that of Methionyl-tRNA formyltransferase from Streptococcus mutans serotype c (strain ATCC 700610 / UA159).